The primary structure comprises 469 residues: Serine carboxypeptidase-like 41 (469 aa).

Positions 1–20 are cleaved as a signal peptide; the sequence is MAIVSLRDVAMVMVTVQVFA. Disulfide bonds link Cys83–Cys342, Cys243–Cys260, and Cys285–Cys310. Residue Asn134 is glycosylated (N-linked (GlcNAc...) asparagine). Residue Ser175 is part of the active site. Residue Asn255 is glycosylated (N-linked (GlcNAc...) asparagine). N-linked (GlcNAc...) asparagine glycosylation is found at Asn331 and Asn347. Residues Asp379 and His436 contribute to the active site. Asn461 is a glycosylation site (N-linked (GlcNAc...) asparagine).

The protein belongs to the peptidase S10 family. Expressed in flowers.

It is found in the secreted. Functionally, probable carboxypeptidase. In Arabidopsis thaliana (Mouse-ear cress), this protein is Serine carboxypeptidase-like 41 (SCPL41).